The sequence spans 90 residues: Probable Fe(2+)-trafficking protein (90 aa).

Belongs to the Fe(2+)-trafficking protein family.

Its function is as follows. Could be a mediator in iron transactions between iron acquisition and iron-requiring processes, such as synthesis and/or repair of Fe-S clusters in biosynthetic enzymes. The sequence is that of Probable Fe(2+)-trafficking protein from Acinetobacter baylyi (strain ATCC 33305 / BD413 / ADP1).